The primary structure comprises 583 residues: NEDD4-binding protein 2-like 2 (583 aa).

Residues 162–197 (NSEKSEIDNELFQFYKEIEELEKEKDGFENSCKESE) adopt a coiled-coil conformation. Residues 549-575 (EPSHKSTQRPPPPQGRQRWGGSLGSHN) are disordered.

This chain is NEDD4-binding protein 2-like 2 (N4BP2L2), found in Homo sapiens (Human).